The following is a 195-amino-acid chain: U8 snoRNA-decapping enzyme (195 aa).

The 151-residue stretch at 18 to 168 (GWRHACHALL…LENTFIGNAR (151 aa)) folds into the Nudix hydrolase domain. Residues His-24, Arg-50, and Phe-57 each contribute to the substrate site. Residues Gly-59, Glu-76, Glu-80, and His-99 each coordinate Mn(2+). Positions 61–82 (FVDLRDGSLEDGLNRELGEELG) match the Nudix box motif. Substrate contacts are provided by Asn-166 and Gln-170. Position 173 (Glu-173) interacts with Mn(2+).

It belongs to the Nudix hydrolase family. NUDT16 subfamily. In terms of assembly, homodimer. It depends on Mg(2+) as a cofactor. Requires Mn(2+) as cofactor. Co(2+) is required as a cofactor.

The protein resides in the nucleus. It localises to the nucleolus. Its subcellular location is the nucleoplasm. The protein localises to the cytoplasm. It carries out the reaction a 5'-end (N(7)-methyl 5'-triphosphoguanosine)-ribonucleoside in mRNA + H2O = N(7)-methyl-GDP + a 5'-end phospho-ribonucleoside in mRNA + 2 H(+). It catalyses the reaction IDP + H2O = IMP + phosphate + H(+). The enzyme catalyses dIDP + H2O = dIMP + phosphate + H(+). The catalysed reaction is a 5'-end NAD(+)-phospho-ribonucleoside in mRNA + H2O = a 5'-end phospho-ribonucleoside in mRNA + NAD(+) + H(+). It carries out the reaction a 5'-end FAD-phospho-ribonucleoside in mRNA + H2O = a 5'-end phospho-adenosine-phospho-ribonucleoside in mRNA + FMN + 2 H(+). It catalyses the reaction a 5'-end CoA-ribonucleoside in mRNA + H2O = a 5'-end phospho-adenosine-phospho-ribonucleoside in mRNA + (R)-4'-phosphopantetheine + 2 H(+). In terms of biological role, RNA-binding and decapping enzyme that catalyzes the cleavage of the cap structure of snoRNAs and mRNAs in a metal-dependent manner. Part of the U8 snoRNP complex that is required for the accumulation of mature 5.8S and 28S rRNA. Has diphosphatase activity and removes m7G and/or m227G caps from U8 snoRNA and leaves a 5'monophosphate on the RNA. Also catalyzes the cleavage of the cap structure on mRNAs. Does not hydrolyze cap analog structures like 7-methylguanosine nucleoside triphosphate (m7GpppG). Also hydrolysis m7G- and m227G U3-capped RNAs but with less efficiencies. Has broad substrate specificity with manganese or cobalt as cofactor and can act on various RNA species. Binds to the U8 snoRNA; metal is not required for RNA-binding. May play a role in the regulation of snoRNAs and mRNAs degradation. Also acts as a phosphatase; hydrolyzes the non-canonical purine nucleotides inosine diphosphate (IDP) and deoxyinosine diphosphate (dITP) as well as guanosine diphosphate (GDP), deoxyguanosine diphosphate (dGDP), xanthine diphosphate (XDP), inosine triphosphate (ITP) and deoxyinosine triphosphate (ITP) to their respective monophosphate derivatives and does not distinguish between the deoxy- and ribose forms. The order of activity with different substrates is IDP &gt; dIDP &gt;&gt; GDP = dGDP &gt; XDP = ITP = dITP. Binds strongly to GTP, ITP and XTP. Participates in the hydrolysis of dIDP/IDP and probably excludes non-canonical purines from RNA and DNA precursor pools, thus preventing their incorporation into RNA and DNA and avoiding chromosomal lesions. Exhibits decapping activity towards NAD-capped RNAs and FAD-capped RNAs. Exhibits decapping activity towards dpCoA-capped RNAs in vitro. In Bos taurus (Bovine), this protein is U8 snoRNA-decapping enzyme (NUDT16).